The chain runs to 285 residues: Heterogeneous nuclear ribonucleoprotein A/B (285 aa).

Positions 1 to 65 (MSDAAEEQPM…NQNGAEGDQI (65 aa)) are disordered. Low complexity predominate over residues 25–43 (EGEAPVEPSAAAAAPAASA). 2 RRM domains span residues 75-158 (GKMF…KDPV) and 159-238 (KKIF…QPKE). The residue at position 87 (Ser87) is a Phosphoserine. Residues Lys136 and Lys208 each participate in a glycyl lysine isopeptide (Lys-Gly) (interchain with G-Cter in SUMO2) cross-link. N6-acetyllysine is present on Lys220. Residues 239–285 (VYQQQQYGSGGRGNRNRGNRGSGGGQGSTNYGKSQRRGGHQNNYKPY) form a disordered region. Phosphoserine is present on Ser247. Arg250 carries the post-translational modification Dimethylated arginine; alternate. Arg250 is subject to Omega-N-methylarginine; alternate. Residues Arg255 and Arg258 each carry the omega-N-methylarginine modification. Lys271 carries the post-translational modification N6-acetyllysine. The residue at position 275 (Arg275) is a Dimethylated arginine; alternate. Omega-N-methylarginine; alternate is present on Arg275. The residue at position 275 (Arg275) is an Asymmetric dimethylarginine; alternate.

Identified in a IGF2BP1-dependent mRNP granule complex containing untranslated mRNAs. Interacts with APOBEC1. As to expression, ubiquitous.

Its subcellular location is the nucleus. It is found in the cytoplasm. Functionally, transcriptional repressor. Binds to CArG box motifs, single-stranded and double-stranded DNA, and RNA. It may be that repression by CBF-A is a result of competitive binding of CBF, a putative positive factor, and CBF-A to the same or overlapping motifs around the CArG boxes. The polypeptide is Heterogeneous nuclear ribonucleoprotein A/B (Hnrnpab) (Mus musculus (Mouse)).